Consider the following 371-residue polypeptide: Cytochrome b (371 aa).

Helical transmembrane passes span 25-45 (FGSM…FLAV), 69-90 (WMMQ…YIHI), 105-125 (WMSG…GYVL), and 170-190 (FFAL…LHVI). Residues H75 and H89 each contribute to the heme b site. Heme b-binding residues include H174 and H188. Residue H193 participates in a ubiquinone binding. 4 helical membrane passes run 218-238 (HKDL…VSFF), 280-300 (LGGA…PFTH), 312-332 (LSQL…WAAT), and 339-358 (FITI…LSIP).

It belongs to the cytochrome b family. The cytochrome bc1 complex contains 3 respiratory subunits (MT-CYB, CYC1 and UQCRFS1), 2 core proteins (UQCRC1 and UQCRC2) and probably 6 low-molecular weight proteins. It depends on heme b as a cofactor.

It is found in the mitochondrion inner membrane. Component of the ubiquinol-cytochrome c reductase complex (complex III or cytochrome b-c1 complex) that is part of the mitochondrial respiratory chain. The b-c1 complex mediates electron transfer from ubiquinol to cytochrome c. Contributes to the generation of a proton gradient across the mitochondrial membrane that is then used for ATP synthesis. This chain is Cytochrome b (MT-CYB), found in Liasis mackloti savuensis (Savu python).